A 339-amino-acid polypeptide reads, in one-letter code: Anthranilate phosphoribosyltransferase (339 aa).

5-phospho-alpha-D-ribose 1-diphosphate is bound by residues Gly79, 82 to 83 (GD), Thr87, 89 to 92 (NVST), 107 to 115 (KHGNRSVSS), and Ser119. Gly79 lines the anthranilate pocket. Mg(2+) is bound at residue Ser91. Residue Asn110 coordinates anthranilate. Arg165 lines the anthranilate pocket. Mg(2+) contacts are provided by Asp224 and Glu225.

The protein belongs to the anthranilate phosphoribosyltransferase family. Homodimer. Mg(2+) serves as cofactor.

The catalysed reaction is N-(5-phospho-beta-D-ribosyl)anthranilate + diphosphate = 5-phospho-alpha-D-ribose 1-diphosphate + anthranilate. The protein operates within amino-acid biosynthesis; L-tryptophan biosynthesis; L-tryptophan from chorismate: step 2/5. In terms of biological role, catalyzes the transfer of the phosphoribosyl group of 5-phosphorylribose-1-pyrophosphate (PRPP) to anthranilate to yield N-(5'-phosphoribosyl)-anthranilate (PRA). This chain is Anthranilate phosphoribosyltransferase, found in Caldivirga maquilingensis (strain ATCC 700844 / DSM 13496 / JCM 10307 / IC-167).